Reading from the N-terminus, the 380-residue chain is Crotonobetainyl-CoA reductase (380 aa).

Belongs to the acyl-CoA dehydrogenase family. Homotetramer. Requires FAD as cofactor.

It is found in the cytoplasm. The catalysed reaction is 4-(trimethylamino)butanoyl-CoA + oxidized [electron-transfer flavoprotein] + H(+) = crotonobetainyl-CoA + reduced [electron-transfer flavoprotein]. It participates in amine and polyamine metabolism; carnitine metabolism. In terms of biological role, catalyzes the reduction of crotonobetainyl-CoA to gamma-butyrobetainyl-CoA. This is Crotonobetainyl-CoA reductase from Salmonella typhi.